A 146-amino-acid polypeptide reads, in one-letter code: Hemoglobin subunit delta (146 aa).

Positions 2–146 (HLTGDEKSAV…VATALAHKYH (145 aa)) constitute a Globin domain. Serine 50 is subject to Phosphoserine. Positions 63 and 92 each coordinate heme b.

The protein belongs to the globin family. Heterotetramer of two delta chains and two alpha chains. Red blood cells.

The chain is Hemoglobin subunit delta (HBD) from Saimiri sciureus (Common squirrel monkey).